A 491-amino-acid polypeptide reads, in one-letter code: UDP-N-acetylmuramate--L-alanine ligase (491 aa).

126–132 (GTHGKTT) serves as a coordination point for ATP.

This sequence belongs to the MurCDEF family.

Its subcellular location is the cytoplasm. The enzyme catalyses UDP-N-acetyl-alpha-D-muramate + L-alanine + ATP = UDP-N-acetyl-alpha-D-muramoyl-L-alanine + ADP + phosphate + H(+). Its pathway is cell wall biogenesis; peptidoglycan biosynthesis. Cell wall formation. This Salmonella paratyphi A (strain ATCC 9150 / SARB42) protein is UDP-N-acetylmuramate--L-alanine ligase.